The sequence spans 480 residues: UDP-glucose 6-dehydrogenase 2 (480 aa).

Residues 8 to 13 (GAGYVG), Asp-33, Arg-38, 86 to 90 (VNTPT), 127 to 128 (ST), and Glu-161 each bind NAD(+). Substrate is bound by residues 157–161 (EFLAE), 216–223 (KLAANAFL), and 256–269 (RIGPKFLNSSVGFG). Cys-272 (nucleophile) is an active-site residue. 272-275 (CFQK) lines the NAD(+) pocket. 334-335 (FK) contributes to the substrate binding site. Arg-342 is an NAD(+) binding site. Substrate is bound at residue Arg-447.

The protein belongs to the UDP-glucose/GDP-mannose dehydrogenase family. In terms of tissue distribution, preferentially expressed in roots.

It carries out the reaction UDP-alpha-D-glucose + 2 NAD(+) + H2O = UDP-alpha-D-glucuronate + 2 NADH + 3 H(+). The protein operates within nucleotide-sugar biosynthesis; UDP-alpha-D-glucuronate biosynthesis; UDP-alpha-D-glucuronate from UDP-alpha-D-glucose: step 1/1. Inhibited by UDP-xylose. Functionally, involved in the biosynthesis of UDP-glucuronic acid (UDP-GlcA), providing nucleotide sugars for cell-wall polymers. Required for the formation of cell wall ingrowths on the outer cell walls of nematode-induced syncytia. The chain is UDP-glucose 6-dehydrogenase 2 (UGD2) from Arabidopsis thaliana (Mouse-ear cress).